Reading from the N-terminus, the 412-residue chain is Gamma-glutamyl phosphate reductase (412 aa).

It belongs to the gamma-glutamyl phosphate reductase family.

It is found in the cytoplasm. The enzyme catalyses L-glutamate 5-semialdehyde + phosphate + NADP(+) = L-glutamyl 5-phosphate + NADPH + H(+). The protein operates within amino-acid biosynthesis; L-proline biosynthesis; L-glutamate 5-semialdehyde from L-glutamate: step 2/2. Functionally, catalyzes the NADPH-dependent reduction of L-glutamate 5-phosphate into L-glutamate 5-semialdehyde and phosphate. The product spontaneously undergoes cyclization to form 1-pyrroline-5-carboxylate. In Nitratiruptor sp. (strain SB155-2), this protein is Gamma-glutamyl phosphate reductase.